The sequence spans 96 residues: ESAT-6-like protein SAG1039 (96 aa).

It belongs to the WXG100 family. sagEsxA-like subfamily. As to quaternary structure, homodimer.

This chain is ESAT-6-like protein SAG1039, found in Streptococcus agalactiae serotype V (strain ATCC BAA-611 / 2603 V/R).